The following is a 635-amino-acid chain: ATP-binding protein Uup (635 aa).

ABC transporter domains lie at 1-253 and 320-546; these read MSLI…RVEE and FEME…KTEE. Residues 36–43 and 352–359 each bind ATP; these read GRNGAGKS and GPNGCGKT. A C-terminal domain (CTD), binds DNA, required to complement a deletion mutant region spans residues 551–635; that stretch reads KAETVKRSSS…EYLEALKNGG (85 aa). Residues 563 to 631 are a coiled coil; sequence SYKLQRELEQ…FERWEYLEAL (69 aa).

This sequence belongs to the ABC transporter superfamily. ABCF family. Uup subfamily.

The protein resides in the cytoplasm. It catalyses the reaction ATP + H2O = ADP + phosphate + H(+). Its activity is regulated as follows. ATPase activity inhibited by N-ethylmaleimide but not by vanadate. Functionally, probably plays a role in ribosome assembly or function; overexpression suppresses cold-sensitive growth of a bipA deletion. May be involved in resolution of branched DNA intermediates that result from template switching in postreplication gaps. Binds DNA at Holliday junctions. May be involved in the correct segregation of nucleoids. Has ATPase activity, binds DNA non-sequence specifically; the presence of DNA does not change the ATPase activity. Mutations in this gene cause an increase in RecA-independent precise excision of transposons and insertion elements, and also reduce bacteriophage Mu growth. Genetic interactions among priB, dam, lexA, nagC, polA, rdgB, rdgB, rep and uup link the PriA-PriB replication restart pathway to DNA double-strand break repair. The polypeptide is ATP-binding protein Uup (Escherichia coli (strain K12)).